A 1408-amino-acid polypeptide reads, in one-letter code: TSET complex member tstA (1408 aa).

Disordered regions lie at residues 259–347 (FWPT…SIIA), 998–1055 (QQSS…AVGS), and 1091–1139 (SSSS…TNLN). The span at 266 to 308 (NNNNNNNNQQINNNNNNNNNNNNNNNNNNNNNNNNNNNNNQNN) shows a compositional bias: low complexity. Residues 309-318 (LINGISSMNL) show a composition bias toward polar residues. 2 stretches are compositionally biased toward low complexity: residues 319-347 (SSIT…SIIA) and 998-1051 (QQSS…ISTS).

This sequence belongs to the TPLATE family. Component of the TSET complex, a heterohexamer composed of tstA, tstB, tstC, tstD, tstE and tstF, which may act in plasma membrane turnover. tstA, tstB, tstC and tstD are likely to be the core complex members with tstE and tstF acting as associated scaffold proteins.

The sequence is that of TSET complex member tstA from Dictyostelium discoideum (Social amoeba).